Consider the following 464-residue polypeptide: Na(+)/H(+) antiporter NhaA (464 aa).

12 consecutive transmembrane segments (helical) span residues 37-57, 82-102, 118-138, 145-165, 176-196, 200-220, 226-246, 248-268, 321-341, 360-380, 396-416, and 430-450; these read GSGI…NTSC, IHYW…GLEI, VLPI…YFSF, VSGW…ILLL, AVLV…IAIF, NLAW…LLLN, ALWA…FSGV, ATVA…YSPT, ILNT…NAGV, VFFG…MICV, VLGI…VSEL, and ITIL…LRFI.

The protein belongs to the NhaA Na(+)/H(+) (TC 2.A.33) antiporter family.

It is found in the cell inner membrane. The enzyme catalyses Na(+)(in) + 2 H(+)(out) = Na(+)(out) + 2 H(+)(in). In terms of biological role, na(+)/H(+) antiporter that extrudes sodium in exchange for external protons. This Dichelobacter nodosus (strain VCS1703A) protein is Na(+)/H(+) antiporter NhaA.